The primary structure comprises 244 residues: MGHKVHPTGIRLGISKDWNSKWYANKGDFAAYLAADLKVREMLRKKLAQAGVSKILIERPAKTARVTIHTARPGVVIGKRGEDIEKLRKEVSELMGVPAHINVTEVRKPELDAQLVAESIAQQLERRIMFRRAMKRSVGNAMRLGALGIKVNVAGRLNGAEIARSEWYREGRVPLHTLRADIDYGFAEASTTYGIIGIKVWIYKGEVFDFSQVGQEKQDDSPRNDRNDRGDRGDRPSRPAREAR.

Residues 39-107 enclose the KH type-2 domain; sequence VREMLRKKLA…PAHINVTEVR (69 aa). A disordered region spans residues 213-244; sequence VGQEKQDDSPRNDRNDRGDRGDRPSRPAREAR. A compositionally biased stretch (basic and acidic residues) spans 216–244; it reads EKQDDSPRNDRNDRGDRGDRPSRPAREAR.

This sequence belongs to the universal ribosomal protein uS3 family. As to quaternary structure, part of the 30S ribosomal subunit. Forms a tight complex with proteins S10 and S14.

Its function is as follows. Binds the lower part of the 30S subunit head. Binds mRNA in the 70S ribosome, positioning it for translation. The chain is Small ribosomal subunit protein uS3 from Xanthomonas oryzae pv. oryzae (strain MAFF 311018).